A 190-amino-acid chain; its full sequence is dCTP deaminase (190 aa).

113–118 contacts dCTP; sequence KSTYAR. Glu139 acts as the Proton donor/acceptor in catalysis. DCTP is bound by residues Gln158, Tyr172, Lys181, and Gln182.

Belongs to the dCTP deaminase family. As to quaternary structure, homotrimer.

The catalysed reaction is dCTP + H2O + H(+) = dUTP + NH4(+). The protein operates within pyrimidine metabolism; dUMP biosynthesis; dUMP from dCTP (dUTP route): step 1/2. Its function is as follows. Catalyzes the deamination of dCTP to dUTP. The chain is dCTP deaminase from Chlamydia caviae (strain ATCC VR-813 / DSM 19441 / 03DC25 / GPIC) (Chlamydophila caviae).